The following is a 435-amino-acid chain: Tektin-4 (435 aa).

Over residues 60-69 (DQSERQRHES) the composition is skewed to basic and acidic residues. The interval 60–96 (DQSERQRHESQQLATETQALAQRTQQDSTRTVGERLQ) is disordered. Low complexity predominate over residues 70–85 (QQLATETQALAQRTQQ). Coiled coils occupy residues 102–180 (KSEL…LLKR), 310–336 (LHKT…DKEA), and 363–411 (FRLL…TNSL).

The protein belongs to the tektin family. As to quaternary structure, microtubule inner protein component of sperm flagellar doublet microtubules. In terms of processing, ubiquitinated, leading to its degradation. Deubiquitinated by USP16, promoting its stability. As to expression, strongly expressed in spermatozoa. Also detected at low levels in pancreas. Expressed in airway epithelial cells.

It is found in the cytoplasm. The protein resides in the cytoskeleton. The protein localises to the cilium axoneme. Its subcellular location is the flagellum axoneme. Functionally, microtubule inner protein (MIP) part of the dynein-decorated doublet microtubules (DMTs) in cilia and flagellar axoneme. Forms filamentous polymers in the walls of ciliary and flagellar microtubules. Contributes to normal sperm motility. The polypeptide is Tektin-4 (Homo sapiens (Human)).